The chain runs to 606 residues: Endonuclease 8-like 3 (606 aa).

V2 (schiff-base intermediate with DNA; via amino nitrogen) is an active-site residue. DNA contacts are provided by N193 and R272. The FPG-type zinc-finger motif lies at 248–282; it reads KVYKRPNCDQCHSKITVCRFGENSRMTYFCPHCQK. The RanBP2-type zinc-finger motif lies at 318 to 347; that stretch reads SEEQWSCVVCTLINRPSAKACDACLTTRPL. The residue at position 451 (S451) is a Phosphoserine. Residues 479–494 show a composition bias toward polar residues; that stretch reads KSYNSGLSNSELQTNR. Residues 479–506 are disordered; the sequence is KSYNSGLSNSELQTNRTRGHHSKSDGSP. Zn(2+) contacts are provided by C508, H511, C534, C542, C555, H557, C580, and C588. 2 consecutive GRF-type zinc fingers follow at residues 508 to 551 and 555 to 597; these read CKMH…ADLS and CRHG…AENG.

Belongs to the FPG family. Expressed in testis, thymus, spleen and bone marrow. In young mice, expressed at higher levels in thymocytes than splenocytes. At 12 dpc, abundant in the subventricular zone (SVZ) of the lateral ventricles. At 17.5 dpc and P0, expression is limited to distinct cells in the cortical SVZ, in cells of the secondary matrix, the dentate gyrus migratory route and the dentate gyrus.

The protein resides in the nucleus. It localises to the chromosome. The catalysed reaction is 2'-deoxyribonucleotide-(2'-deoxyribose 5'-phosphate)-2'-deoxyribonucleotide-DNA = a 3'-end 2'-deoxyribonucleotide-(2,3-dehydro-2,3-deoxyribose 5'-phosphate)-DNA + a 5'-end 5'-phospho-2'-deoxyribonucleoside-DNA + H(+). DNA glycosylase which prefers single-stranded DNA (ssDNA), or partially ssDNA structures such as bubble and fork structures, to double-stranded DNA (dsDNA). Mediates interstrand cross-link repair in response to replication stress: acts by mediating DNA glycosylase activity, cleaving one of the two N-glycosyl bonds comprising the interstrand cross-link, which avoids the formation of a double-strand break but generates an abasic site that is bypassed by translesion synthesis polymerases. In vitro, displays strong glycosylase activity towards the hydantoin lesions spiroiminodihydantoin (Sp) and guanidinohydantoin (Gh) in both ssDNA and dsDNA; also recognizes FapyA, FapyG, 5-OHU, 5-OHC, 5-OHMH, Tg and 8-oxoA lesions in ssDNA. No activity on 8-oxoG detected. Also shows weak DNA-(apurinic or apyrimidinic site) lyase activity. In vivo, appears to be the primary enzyme involved in removing Sp and Gh from ssDNA in neonatal tissues. The chain is Endonuclease 8-like 3 (Neil3) from Mus musculus (Mouse).